The primary structure comprises 129 residues: Small ribosomal subunit protein uS11 (129 aa).

This sequence belongs to the universal ribosomal protein uS11 family. Part of the 30S ribosomal subunit. Interacts with proteins S7 and S18. Binds to IF-3.

Its function is as follows. Located on the platform of the 30S subunit, it bridges several disparate RNA helices of the 16S rRNA. Forms part of the Shine-Dalgarno cleft in the 70S ribosome. In Nitrosomonas eutropha (strain DSM 101675 / C91 / Nm57), this protein is Small ribosomal subunit protein uS11.